Consider the following 101-residue polypeptide: Urease subunit beta (101 aa).

The protein belongs to the urease beta subunit family. Heterotrimer of UreA (gamma), UreB (beta) and UreC (alpha) subunits. Three heterotrimers associate to form the active enzyme.

It localises to the cytoplasm. It catalyses the reaction urea + 2 H2O + H(+) = hydrogencarbonate + 2 NH4(+). It participates in nitrogen metabolism; urea degradation; CO(2) and NH(3) from urea (urease route): step 1/1. The sequence is that of Urease subunit beta from Granulibacter bethesdensis (strain ATCC BAA-1260 / CGDNIH1).